We begin with the raw amino-acid sequence, 886 residues long: Alanine--tRNA ligase (886 aa).

Positions 564, 568, 676, and 680 each coordinate Zn(2+).

The protein belongs to the class-II aminoacyl-tRNA synthetase family. It depends on Zn(2+) as a cofactor.

The protein localises to the cytoplasm. The enzyme catalyses tRNA(Ala) + L-alanine + ATP = L-alanyl-tRNA(Ala) + AMP + diphosphate. Catalyzes the attachment of alanine to tRNA(Ala) in a two-step reaction: alanine is first activated by ATP to form Ala-AMP and then transferred to the acceptor end of tRNA(Ala). Also edits incorrectly charged Ser-tRNA(Ala) and Gly-tRNA(Ala) via its editing domain. The chain is Alanine--tRNA ligase from Bartonella bacilliformis (strain ATCC 35685 / KC583 / Herrer 020/F12,63).